The sequence spans 329 residues: Telomeric repeat-binding factor 2-interacting protein 1 (329 aa).

Positions 63-86 (AVSTDYVVACVESQRRLPLDLYRH) constitute a BRCT domain. One can recognise a Myb-like domain in the interval 94-153 (ASPRGRLPFTEAEDAALLRAVRERSGAPRVSGTALWKELECTGLTRHSWQAMRDRYLRHL). The segment at 179-206 (EFESSESGSDTSDTPDELPLQNGEGTFP) is disordered. The Nuclear localization signal signature appears at 313–329 (AKFGAENVARRVAFRKS).

The protein belongs to the RAP1 family. As to quaternary structure, homodimer. Component of the shelterin complex (telosome). Interacts with terf2; the interaction is direct.

The protein resides in the nucleus. It is found in the chromosome. It localises to the telomere. In terms of biological role, acts both as a regulator of telomere function and as a transcription regulator. Involved in the regulation of telomere length and protection as a component of the shelterin complex (telosome). Does not bind DNA directly: recruited to telomeric double-stranded 5'-TTAGGG-3' repeats via its interaction with terf2. Independently of its function in telomeres, also acts as a transcription regulator: recruited to extratelomeric 5'-TTAGGG-3' sites via its association with terf2 or other factors, and regulates gene expression. This Gallus gallus (Chicken) protein is Telomeric repeat-binding factor 2-interacting protein 1 (TERF2IP).